The primary structure comprises 179 residues: Large ribosomal subunit protein uL5 (179 aa).

Belongs to the universal ribosomal protein uL5 family. In terms of assembly, part of the 50S ribosomal subunit; part of the 5S rRNA/L5/L18/L25 subcomplex. Contacts the 5S rRNA and the P site tRNA. Forms a bridge to the 30S subunit in the 70S ribosome.

This is one of the proteins that bind and probably mediate the attachment of the 5S RNA into the large ribosomal subunit, where it forms part of the central protuberance. In the 70S ribosome it contacts protein S13 of the 30S subunit (bridge B1b), connecting the 2 subunits; this bridge is implicated in subunit movement. Contacts the P site tRNA; the 5S rRNA and some of its associated proteins might help stabilize positioning of ribosome-bound tRNAs. The chain is Large ribosomal subunit protein uL5 from Citrobacter koseri (strain ATCC BAA-895 / CDC 4225-83 / SGSC4696).